We begin with the raw amino-acid sequence, 190 residues long: 3-isopropylmalate dehydratase small subunit (190 aa).

This sequence belongs to the LeuD family. LeuD type 1 subfamily. In terms of assembly, heterodimer of LeuC and LeuD.

It catalyses the reaction (2R,3S)-3-isopropylmalate = (2S)-2-isopropylmalate. Its pathway is amino-acid biosynthesis; L-leucine biosynthesis; L-leucine from 3-methyl-2-oxobutanoate: step 2/4. Catalyzes the isomerization between 2-isopropylmalate and 3-isopropylmalate, via the formation of 2-isopropylmaleate. The chain is 3-isopropylmalate dehydratase small subunit from Staphylococcus aureus (strain MSSA476).